The chain runs to 469 residues: MASPRELTQNPLKKIWMPYSNGRPALHASQRGVCMTNCPTLIVMVGLPARGKTYISKKLTRYLNWIGVPTREFNVGQYRRDMVKTYKSFEFFLPDNEEGLKIRKQCALAALNDVRKFLSEEGGHVAVFDATNTTRERRAMIFNFGEQNGYKTFFVESICVDPEVIAANIVQVKLGSPDYVNRDSDEATEDFMRRIECYENSYESLDEEQDRDLSYIKIMDVGQSYVVNRVADHIQSRIVYYLMNIHVTPRSIYLCRHGESELNLKGRIGGDPGLSPRGREFSKHLAQFISDQNIKDLKVWTSQMKRTIQTAEALSVPYEQWKVLNEIDAGVCEEMTYEEIQDHYPLEFALRDQDKYRYRYPKGESYEDLVQRLEPVIMELERQENVLVICHQAVMRCLLAYFLDKAAEELPYLKCPLHTVLKLTPVAYGCKVESIFLNVAAVNTHRDRPQNVDISRPSEEALVTVPAHQ.

Residues 1–249 (MASPRELTQN…YYLMNIHVTP (249 aa)) are 6-phosphofructo-2-kinase. At Ser-29 the chain carries Phosphoserine; by PKC. 46–54 (GLPARGKTY) contacts ATP. Beta-D-fructose 6-phosphate-binding residues include Arg-79 and Arg-103. Asp-129 is a catalytic residue. Residues Thr-131 and Arg-137 each coordinate beta-D-fructose 6-phosphate. Residue Cys-159 is part of the active site. 168-173 (NIVQVK) contributes to the ATP binding site. Beta-D-fructose 6-phosphate contacts are provided by Lys-173, Arg-194, and Tyr-198. Residues 250 to 469 (RSIYLCRHGE…EALVTVPAHQ (220 aa)) form a fructose-2,6-bisphosphatase region. A beta-D-fructose 2,6-bisphosphate-binding site is contributed by Arg-256. The active-site Tele-phosphohistidine intermediate is the His-257. Beta-D-fructose 2,6-bisphosphate contacts are provided by Asn-263, Gly-269, and Arg-306. Glu-326 (proton donor/acceptor) is an active-site residue. Beta-D-fructose 2,6-bisphosphate-binding residues include Tyr-337, Arg-351, Lys-355, Tyr-366, Gln-392, and Arg-396. 348–351 (FALR) contributes to the ATP binding site. Residues 392-396 (QAVMR) and Tyr-428 contribute to the ATP site. Thr-444 bears the Phosphothreonine; by PKC mark.

In the C-terminal section; belongs to the phosphoglycerate mutase family. In terms of assembly, homodimer. Testis.

It catalyses the reaction beta-D-fructose 2,6-bisphosphate + H2O = beta-D-fructose 6-phosphate + phosphate. The enzyme catalyses beta-D-fructose 6-phosphate + ATP = beta-D-fructose 2,6-bisphosphate + ADP + H(+). Its activity is regulated as follows. The most important regulatory mechanism of these opposing activities is by phosphorylation and dephosphorylation of the enzyme. In terms of biological role, synthesis and degradation of fructose 2,6-bisphosphate. The chain is 6-phosphofructo-2-kinase/fructose-2,6-bisphosphatase 4 (Pfkfb4) from Rattus norvegicus (Rat).